A 180-amino-acid chain; its full sequence is ATP-dependent protease subunit HslV (180 aa).

T5 is a catalytic residue. Na(+) contacts are provided by G165, C168, and T171.

Belongs to the peptidase T1B family. HslV subfamily. In terms of assembly, a double ring-shaped homohexamer of HslV is capped on each side by a ring-shaped HslU homohexamer. The assembly of the HslU/HslV complex is dependent on binding of ATP.

Its subcellular location is the cytoplasm. The catalysed reaction is ATP-dependent cleavage of peptide bonds with broad specificity.. With respect to regulation, allosterically activated by HslU binding. Its function is as follows. Protease subunit of a proteasome-like degradation complex believed to be a general protein degrading machinery. The polypeptide is ATP-dependent protease subunit HslV (Helicobacter acinonychis (strain Sheeba)).